The chain runs to 479 residues: MGNMPKDFLWGGALAAHQFEGGWNQGGKGPSVVDVMTAGAHGVPRKITDTIEENEFYPNHEAIDFYHRYKEDIALFAEMGLKCLRTSIGWSRIFPKGDEAEPNEAGLQFYDDVFDELLKHGIEPVITLSHFEMPLHLAREYGGFRNRKVVDFFVNFAEACFTRYKDKVKYWMTFNEINNQMDVNNPLFLWTNSGVVVGENENAKEVMYQTAHHELVASALAVAKGKDINPEFQIGAMVSHVPIYPFSSNPEDVMLAEEEMRQRYFFPDVQVRGYYPSYALKEFEREGYNITFEDGDDEILRNGTVDYLGFSYYMSTTVKSDVKNDNTGDIVNGGLPNGVENPYITSSDWGWAIDPTGLRYTLNRFYDRYQIPLFIVENGFGAVDTLEEDGKVHDPERIQYLKSHIEALKKAVTYDGVDLIGYTPWGIIDIVSFTTGEMKKRYGMIYVDRDNEGNGSMKRYKKDSFEWYKNVIQTNGEEL.

The active-site Proton donor is Glu176. The active-site Nucleophile is Glu377.

The protein belongs to the glycosyl hydrolase 1 family.

It catalyses the reaction 6-phospho-beta-D-glucosyl-(1-&gt;4)-D-glucose + H2O = D-glucose 6-phosphate + D-glucose. In terms of biological role, catalyzes the hydrolysis of aryl-phospho-beta-D-glucosides such as 4-methylumbelliferyl-phospho-beta-D-glucopyranoside (MUG-P), phosphoarbutin and phosphosalicin. Plays a major role in the utilization of arbutin or salicin as the sole carbon source. BglA and BglH are the major proteins contributing to hydrolysis of MUG-P by extracts of late-exponential-phase or stationary-phase B.subtilis cells. The polypeptide is Aryl-phospho-beta-D-glucosidase BglA (bglA) (Bacillus subtilis (strain 168)).